A 153-amino-acid polypeptide reads, in one-letter code: Superoxide dismutase [Cu-Zn] (153 aa).

H45, H47, and H62 together coordinate Cu cation. Residues C56 and C145 are joined by a disulfide bond. 4 residues coordinate Zn(2+): H62, H70, H79, and D82. H119 lines the Cu cation pocket.

The protein belongs to the Cu-Zn superoxide dismutase family. Homodimer. It depends on Cu cation as a cofactor. Zn(2+) serves as cofactor.

Its subcellular location is the cytoplasm. The enzyme catalyses 2 superoxide + 2 H(+) = H2O2 + O2. Its function is as follows. Destroys radicals which are normally produced within the cells and which are toxic to biological systems. The chain is Superoxide dismutase [Cu-Zn] from Drosophila orena (Fruit fly).